Reading from the N-terminus, the 321-residue chain is Phospho-N-acetylmuramoyl-pentapeptide-transferase (321 aa).

9 helical membrane-spanning segments follow: residues 1–21 (MSLL…FALM), 53–73 (TMGG…VGGW), 77–97 (LQPT…LGFW), 110–130 (GLKA…LTLV), 145–165 (LGVW…LVGF), 174–194 (GLDG…AVIA), 200–220 (YNVM…FVYN), 226–248 (IFMG…ILLH), and 301–321 (IDIV…ATII).

This sequence belongs to the glycosyltransferase 4 family. MraY subfamily. Mg(2+) is required as a cofactor.

The protein localises to the cell membrane. It carries out the reaction UDP-N-acetyl-alpha-D-muramoyl-L-alanyl-gamma-D-glutamyl-L-lysyl-D-alanyl-D-alanine + di-trans,octa-cis-undecaprenyl phosphate = Mur2Ac(oyl-L-Ala-gamma-D-Glu-L-Lys-D-Ala-D-Ala)-di-trans,octa-cis-undecaprenyl diphosphate + UMP. It participates in cell wall biogenesis; peptidoglycan biosynthesis. Functionally, catalyzes the initial step of the lipid cycle reactions in the biosynthesis of the cell wall peptidoglycan: transfers peptidoglycan precursor phospho-MurNAc-pentapeptide from UDP-MurNAc-pentapeptide onto the lipid carrier undecaprenyl phosphate, yielding undecaprenyl-pyrophosphoryl-MurNAc-pentapeptide, known as lipid I. The chain is Phospho-N-acetylmuramoyl-pentapeptide-transferase from Lactiplantibacillus plantarum (strain ATCC BAA-793 / NCIMB 8826 / WCFS1) (Lactobacillus plantarum).